Here is an 870-residue protein sequence, read N- to C-terminus: DNA mismatch repair protein MutS (870 aa).

An ATP-binding site is contributed by G620–S627.

This sequence belongs to the DNA mismatch repair MutS family.

Functionally, this protein is involved in the repair of mismatches in DNA. It is possible that it carries out the mismatch recognition step. This protein has a weak ATPase activity. The protein is DNA mismatch repair protein MutS of Syntrophotalea carbinolica (strain DSM 2380 / NBRC 103641 / GraBd1) (Pelobacter carbinolicus).